Consider the following 1450-residue polypeptide: MALETDAKNSNAVAPGDAATVATTKAKENNSSAGKKQQQQQQPNQNQNLVNGNGNAADGPAAKKKGKKNRNKSPPEPAAEPVEASLSNGHAEKTTSEEGGDTAAPDTNANVGEKSEDGGGAAPGSELETEDIDLDALHEVGITVNISSPGADILSVQLSSMELVQEIHQLLMDREETCHRTCFSLQLDNVTLDNFAELKTIEQLEQGSTIRVVEEPYTMREARIHVRHVRDLLKNLDPADAYNGIDCTSLTYLNTITQGDLLDKKKTRPDSVDCTPPEYVTPGVSEPPLLPLHPNIKNAKGPQALKVLTTSAWNPPPGPRKLHGDLMYLYVVTMEDKRFHISACSKGFYINQSTDDTFNPKPDNPSHLSHSLIDLLSHISPSFRRAFQTIQKRRTTRHAFERVATPYQVYQWASPVLEHTVDAIRAEDAFSSKLGYEEHIPGQTRDWNEELQTTRELPRKTLPERLLRERAIFKVHGDFVTAATRGAMAVIDGNVLAINPGEDAKMQMFIWNNIFFSLGFDVRDHYKELGGDAAAFVAPRYDLHGVRVYNAVDVEGLYTLGTVVIDYRGYRVTAQSIIPGILEREQEQSVVYGSIDFGKTVLSHPKYLDLLRQAGKHLKILPHAVLNERDEPVELCSSVECKGIIGNDGRHYILDLLRTFPPDVNFLKLPEVQLSKELVDMGFPIEHRHKLCCLRQELLEAFIEDRYVSFIRIAAVHLQQLNAKKQSEKTEEKALPALEEAEKESSETKEAEAEKPVEKKEEEKQQPSSNETKTAEAMVNAIREAQSNVATSNEVQAAEVVKRACAAVGSLKEKEFDFRFNPDVFSNGIRHVDGEEGTCSSLAKQKVLVQDAAEFLVVKQIPAFIKEHLAHSSPPIDGQSLTESLHSHGINVRYLGKVIKLLAQMPRMDYLHRIAVLELIVRATKHIYYTYMQNTEPLHLSAAISHFLNCLLTTGPVNPAVSSEEAHKKRSNGNKHNKHKSKGNKQQASGNQNGSSAGSSSGGSSSSSDWTLVTPRSLWQQIRREAKSYWDWELDCDSIETAVSKYGILRISLLRAFCLKVGIQVLLREYNFESKHKPTFGDEDIVNVFPVVKHISPRATDAYNFYTTGQAKIQQGMFKEGYELISEALNLLNNVFGAMHQENGSCLRMLARLSYLLGDAQDALAIQQRAVIMSERVNGIDHPSTILEYTHLSLYSFANGHVGMSLKLLYRARYLMVLICGEDHPEVALIDSNISLILHALGEYELSLRFIEHALKLNIKYFGSKAMHVAFSYHLMARTQSCMGDFRSALNNEKETYSIYKSQVGEKHEKTRDSAECLRLLTQQAVLLQRKMNDIYSNGKLTSDLPPIHITPPSMGSVLDMLNTINGILFVQISQKDIVKVRSEIEKHFKANSAENEVNDAIKSIVAAANNNGDTEAETKDATKDNKDLAGASTQLTNGDKDAETAVASS.

Disordered regions lie at residues 1 to 126 (MALE…PGSE) and 266 to 287 (KTRP…VSEP). A compositionally biased stretch (low complexity) spans 29–60 (NNSSAGKKQQQQQQPNQNQNLVNGNGNAADGP). A compositionally biased stretch (basic residues) spans 62-71 (AKKKGKKNRN). S271 is modified (phosphoserine). The region spanning 425–667 (RAEDAFSSKL…RTFPPDVNFL (243 aa)) is the Clu domain. Composition is skewed to basic and acidic residues over residues 725 to 734 (KQSEKTEEKA) and 743 to 765 (KESS…EEKQ). 2 disordered regions span residues 725 to 775 (KQSE…TKTA) and 959 to 1011 (PAVS…SDWT). Basic residues predominate over residues 968-983 (KKRSNGNKHNKHKSKG). A compositionally biased stretch (low complexity) spans 984–1008 (NKQQASGNQNGSSAGSSSGGSSSSS). TPR repeat units follow at residues 1102-1135 (AYNF…LNNV), 1228-1261 (ALID…NIKY), and 1263-1296 (GSKA…EKET). The interval 1410-1450 (NNNGDTEAETKDATKDNKDLAGASTQLTNGDKDAETAVASS) is disordered. Positions 1417-1428 (AETKDATKDNKD) are enriched in basic and acidic residues.

This sequence belongs to the CLU family.

It is found in the cytoplasm. Its function is as follows. mRNA-binding protein involved in proper cytoplasmic distribution of mitochondria. In Drosophila ananassae (Fruit fly), this protein is Protein clueless.